Consider the following 245-residue polypeptide: tRNA pseudouridine synthase A (245 aa).

The Nucleophile role is filled by Asp-52. Tyr-111 provides a ligand contact to substrate.

The protein belongs to the tRNA pseudouridine synthase TruA family. As to quaternary structure, homodimer.

It carries out the reaction uridine(38/39/40) in tRNA = pseudouridine(38/39/40) in tRNA. In terms of biological role, formation of pseudouridine at positions 38, 39 and 40 in the anticodon stem and loop of transfer RNAs. This chain is tRNA pseudouridine synthase A, found in Xanthobacter autotrophicus (strain ATCC BAA-1158 / Py2).